The primary structure comprises 165 residues: DELTA-actitoxin-Oor1a (165 aa).

An N-terminal region region spans residues 1–17 (ATFRVLAKVLAELGKVS). Residues Ser-41, Val-74, Ser-92, Pro-94, and Tyr-125 each contribute to the phosphocholine site. The interval 92-107 (SVPYDYNLYSNWWNVK) is trp-rich region, which is important for the binding to lipid membrane.

It belongs to the actinoporin family. Sea anemone subfamily. In terms of assembly, octamer or nonamer in membranes. Monomer in the soluble state.

The protein localises to the secreted. It is found in the nematocyst. It localises to the target cell membrane. Its function is as follows. Pore-forming protein that forms cations-selective hydrophilic pores of around 1 nm and causes cardiac stimulation and cytolysis. Pore formation is a multi-step process that involves specific recognition of membrane sphingomyelin (but neither cholesterol nor phosphatidylcholine) using aromatic rich region and adjacent phosphocholine (POC) binding site, firm binding to the membrane (mainly driven by hydrophobic interactions) accompanied by the transfer of the N-terminal region to the lipid-water interface and finally pore formation after oligomerization of monomers. Cytolytic effects include red blood cells hemolysis, platelet aggregation and lysis, cytotoxic and cytostatic effects on fibroblasts. Lethality in mammals has been ascribed to severe vasospasm of coronary vessels, cardiac arrhythmia, and inotropic effects. This is DELTA-actitoxin-Oor1a from Oulactis orientalis (Japan anemone).